We begin with the raw amino-acid sequence, 245 residues long: 23S rRNA (guanosine-2'-O-)-methyltransferase RlmB (245 aa).

S-adenosyl-L-methionine contacts are provided by G197, I217, and L226.

This sequence belongs to the class IV-like SAM-binding methyltransferase superfamily. RNA methyltransferase TrmH family. RlmB subfamily.

It is found in the cytoplasm. It catalyses the reaction guanosine(2251) in 23S rRNA + S-adenosyl-L-methionine = 2'-O-methylguanosine(2251) in 23S rRNA + S-adenosyl-L-homocysteine + H(+). In terms of biological role, specifically methylates the ribose of guanosine 2251 in 23S rRNA. The sequence is that of 23S rRNA (guanosine-2'-O-)-methyltransferase RlmB from Pasteurella multocida (strain Pm70).